The sequence spans 324 residues: Elongation factor P--(R)-beta-lysine ligase (324 aa).

75–77 (SPE) is a substrate binding site. ATP is bound by residues 99 to 101 (RNQ) and N108. Y117 lines the substrate pocket. Residue 243-244 (EL) participates in ATP binding. E250 provides a ligand contact to substrate. Position 299 (G299) interacts with ATP.

It belongs to the class-II aminoacyl-tRNA synthetase family. EpmA subfamily. In terms of assembly, homodimer.

The catalysed reaction is D-beta-lysine + L-lysyl-[protein] + ATP = N(6)-((3R)-3,6-diaminohexanoyl)-L-lysyl-[protein] + AMP + diphosphate + H(+). In terms of biological role, with EpmB is involved in the beta-lysylation step of the post-translational modification of translation elongation factor P (EF-P). Catalyzes the ATP-dependent activation of (R)-beta-lysine produced by EpmB, forming a lysyl-adenylate, from which the beta-lysyl moiety is then transferred to the epsilon-amino group of a conserved specific lysine residue in EF-P. The protein is Elongation factor P--(R)-beta-lysine ligase of Buchnera aphidicola subsp. Schizaphis graminum (strain Sg).